A 100-amino-acid chain; its full sequence is Aspartyl/glutamyl-tRNA(Asn/Gln) amidotransferase subunit C (100 aa).

The protein belongs to the GatC family. Heterotrimer of A, B and C subunits.

The enzyme catalyses L-glutamyl-tRNA(Gln) + L-glutamine + ATP + H2O = L-glutaminyl-tRNA(Gln) + L-glutamate + ADP + phosphate + H(+). The catalysed reaction is L-aspartyl-tRNA(Asn) + L-glutamine + ATP + H2O = L-asparaginyl-tRNA(Asn) + L-glutamate + ADP + phosphate + 2 H(+). Allows the formation of correctly charged Asn-tRNA(Asn) or Gln-tRNA(Gln) through the transamidation of misacylated Asp-tRNA(Asn) or Glu-tRNA(Gln) in organisms which lack either or both of asparaginyl-tRNA or glutaminyl-tRNA synthetases. The reaction takes place in the presence of glutamine and ATP through an activated phospho-Asp-tRNA(Asn) or phospho-Glu-tRNA(Gln). The protein is Aspartyl/glutamyl-tRNA(Asn/Gln) amidotransferase subunit C of Rickettsia felis (strain ATCC VR-1525 / URRWXCal2) (Rickettsia azadi).